Consider the following 386-residue polypeptide: Uroporphyrinogen decarboxylase (386 aa).

Coproporphyrinogen I is bound by residues Arg-44, Ala-46, Arg-48, Arg-57, Asp-93, Tyr-170, Ser-225, and His-364. Residues Arg-44, Ala-46, and Arg-48 each coordinate coproporphyrinogen III. Coproporphyrinogen III-binding residues include Asp-93, Tyr-170, Ser-225, and His-364.

This sequence belongs to the uroporphyrinogen decarboxylase family. Homodimer.

It is found in the cytoplasm. The protein resides in the cytosol. The catalysed reaction is uroporphyrinogen III + 4 H(+) = coproporphyrinogen III + 4 CO2. It functions in the pathway porphyrin-containing compound metabolism; protoporphyrin-IX biosynthesis; coproporphyrinogen-III from 5-aminolevulinate: step 4/4. Catalyzes the decarboxylation of four acetate groups of uroporphyrinogen-III to yield coproporphyrinogen-III. The chain is Uroporphyrinogen decarboxylase from Drosophila virilis (Fruit fly).